Consider the following 189-residue polypeptide: Chitin synthase 1 (189 aa).

The protein belongs to the chitin synthase family. Class I subfamily.

The protein localises to the cell membrane. The enzyme catalyses [(1-&gt;4)-N-acetyl-beta-D-glucosaminyl](n) + UDP-N-acetyl-alpha-D-glucosamine = [(1-&gt;4)-N-acetyl-beta-D-glucosaminyl](n+1) + UDP + H(+). In terms of biological role, polymerizes chitin, a structural polymer of the cell wall and septum, by transferring the sugar moiety of UDP-GlcNAc to the non-reducing end of the growing chitin polymer. The protein is Chitin synthase 1 (chs1) of Botryotinia fuckeliana (Noble rot fungus).